The chain runs to 458 residues: Protein amnionless (458 aa).

Positions 1–19 are cleaved as a signal peptide; the sequence is MGALGRALLWLQLCALARA. Residues 20–366 are Extracellular-facing; the sequence is AYKLWVPTTD…LGSGSRAGLA (347 aa). An N-linked (GlcNAc...) asparagine glycan is attached at N35. Intrachain disulfides connect C43–C96, C137–C213, C205–C211, C223–C249, C234–C250, and C239–C253. Residues 67–87 are interaction with CUBN; that stretch reads SDMLLPRDGEFVLASGAGFGA. The VWFC domain occupies 203 to 254; sequence GACADPSGCVCGDAEVQPWICAALLQPLGGRCPPAACPDALRPEGQCCDLCG. A helical membrane pass occupies residues 367 to 387; that stretch reads GGVAAGLLLLLLALAAGLLLL. Residues 388 to 458 lie on the Cytoplasmic side of the membrane; that stretch reads RRAPRLRWTK…VNPLFAEAEA (71 aa). The interval 422–446 is disordered; sequence SVGPVPRTPQPPPAQQAGSSSTSRS.

In terms of assembly, interacts (via extracellular region) with CUBN/cubilin. This gives rise to a huge complex containing one AMN chain and three CUBN chains. N-glycosylated. Post-translationally, a soluble form arises by proteolytic removal of the membrane anchor. In terms of tissue distribution, detected in kidney (at protein level). Detected in kidney and ileum.

It localises to the apical cell membrane. It is found in the cell membrane. Its subcellular location is the endosome membrane. The protein resides in the membrane. The protein localises to the coated pit. It localises to the secreted. Its function is as follows. Membrane-bound component of the endocytic receptor formed by AMN and CUBN. Required for normal CUBN glycosylation and trafficking to the cell surface. The complex formed by AMN and CUBN is required for efficient absorption of vitamin B12. Required for normal CUBN-mediated protein transport in the kidney. This Canis lupus familiaris (Dog) protein is Protein amnionless (AMN).